The chain runs to 293 residues: Homoserine kinase (293 aa).

80 to 90 (RPASGLGSSAA) is an ATP binding site.

The protein belongs to the GHMP kinase family. Homoserine kinase subfamily.

Its subcellular location is the cytoplasm. It catalyses the reaction L-homoserine + ATP = O-phospho-L-homoserine + ADP + H(+). The protein operates within amino-acid biosynthesis; L-threonine biosynthesis; L-threonine from L-aspartate: step 4/5. Functionally, catalyzes the ATP-dependent phosphorylation of L-homoserine to L-homoserine phosphate. This chain is Homoserine kinase, found in Halorubrum lacusprofundi (strain ATCC 49239 / DSM 5036 / JCM 8891 / ACAM 34).